A 319-amino-acid polypeptide reads, in one-letter code: Methyltransferase tpcM (319 aa).

The interval 63-155 is methyltransferase domain; it reads DVGAGIGPYA…QLRPGGTFAC (93 aa).

Belongs to the methyltransferase superfamily. As to expression, specifically expressed in conidia.

It functions in the pathway secondary metabolite biosynthesis. Its function is as follows. Methyltransferase; part of the gene cluster that mediates the biosynthesis of trypacidin, a mycotoxin with antiprotozoal activity and that plays a role in the infection process. The pathway begins with the synthesis of atrochrysone thioester by the polyketide synthase (PKS) tpcC. The atrochrysone carboxyl ACP thioesterase tpcB then breaks the thioester bond and releases the atrochrysone carboxylic acid from tpcC. The decarboxylase tpcK converts atrochrysone carboxylic acid to atrochrysone which is further reduced into emodin anthrone. The next step is performed by the emodin anthrone oxygenase tpcL that catalyzes the oxidation of emodinanthrone to emodin. Emodin O-methyltransferase encoded by tpcA catalyzes methylation of the 8-hydroxy group of emodin to form questin. Ring cleavage of questin by questin oxidase tpcI leads to desmethylsulochrin via several intermediates including questin epoxide. Another methylation step catalyzed by tpcM leads to the formation of sulochrin which is further converted to monomethylsulfochrin by tpcH. Finally, the tpcJ catalyzes the conversion of monomethylsulfochrin to trypacidin. Trypacidin is toxic for human pulmonary and bronchial epithelial cells by initiating the intracellular formation of nitric oxide (NO) and hydrogen peroxide (H(2)O(2)), thus triggering host necrotic cell death. The trypacidin pathway is also able to produce endocrocin via a distinct route from the endocrocin Enc pathway. This is Methyltransferase tpcM from Aspergillus fumigatus (strain ATCC MYA-4609 / CBS 101355 / FGSC A1100 / Af293) (Neosartorya fumigata).